Consider the following 387-residue polypeptide: ATP phosphoribosyltransferase regulatory subunit (387 aa).

Belongs to the class-II aminoacyl-tRNA synthetase family. HisZ subfamily. In terms of assembly, heteromultimer composed of HisG and HisZ subunits.

The protein resides in the cytoplasm. It functions in the pathway amino-acid biosynthesis; L-histidine biosynthesis; L-histidine from 5-phospho-alpha-D-ribose 1-diphosphate: step 1/9. In terms of biological role, required for the first step of histidine biosynthesis. May allow the feedback regulation of ATP phosphoribosyltransferase activity by histidine. The sequence is that of ATP phosphoribosyltransferase regulatory subunit from Methylobacillus flagellatus (strain ATCC 51484 / DSM 6875 / VKM B-1610 / KT).